The following is a 267-amino-acid chain: Hydroxyethylthiazole kinase 2 (267 aa).

M41 is a binding site for substrate. The ATP site is built by K116 and T166. Residue G193 participates in substrate binding.

It belongs to the Thz kinase family. Mg(2+) is required as a cofactor.

It catalyses the reaction 5-(2-hydroxyethyl)-4-methylthiazole + ATP = 4-methyl-5-(2-phosphooxyethyl)-thiazole + ADP + H(+). It participates in cofactor biosynthesis; thiamine diphosphate biosynthesis; 4-methyl-5-(2-phosphoethyl)-thiazole from 5-(2-hydroxyethyl)-4-methylthiazole: step 1/1. Catalyzes the phosphorylation of the hydroxyl group of 4-methyl-5-beta-hydroxyethylthiazole (THZ). This chain is Hydroxyethylthiazole kinase 2, found in Streptococcus pneumoniae (strain P1031).